Reading from the N-terminus, the 341-residue chain is Holliday junction branch migration complex subunit RuvB (341 aa).

A large ATPase domain (RuvB-L) region spans residues 1–182 (MTSSDPTLRP…FGIPTRLQFY (182 aa)). ATP contacts are provided by residues Leu-21, Arg-22, Gly-63, Lys-66, Thr-67, Thr-68, 129–131 (EDF), Arg-172, Tyr-182, and Arg-219. Thr-67 contacts Mg(2+). A small ATPAse domain (RuvB-S) region spans residues 183 to 253 (TEDELDLIVA…IADRALTRLG (71 aa)). The tract at residues 256–341 (HLGLDLGDRR…KGPGQSDLFG (86 aa)) is head domain (RuvB-H). DNA is bound by residues Arg-292, Arg-311, and Arg-316.

This sequence belongs to the RuvB family. Homohexamer. Forms an RuvA(8)-RuvB(12)-Holliday junction (HJ) complex. HJ DNA is sandwiched between 2 RuvA tetramers; dsDNA enters through RuvA and exits via RuvB. An RuvB hexamer assembles on each DNA strand where it exits the tetramer. Each RuvB hexamer is contacted by two RuvA subunits (via domain III) on 2 adjacent RuvB subunits; this complex drives branch migration. In the full resolvosome a probable DNA-RuvA(4)-RuvB(12)-RuvC(2) complex forms which resolves the HJ.

The protein resides in the cytoplasm. It carries out the reaction ATP + H2O = ADP + phosphate + H(+). Functionally, the RuvA-RuvB-RuvC complex processes Holliday junction (HJ) DNA during genetic recombination and DNA repair, while the RuvA-RuvB complex plays an important role in the rescue of blocked DNA replication forks via replication fork reversal (RFR). RuvA specifically binds to HJ cruciform DNA, conferring on it an open structure. The RuvB hexamer acts as an ATP-dependent pump, pulling dsDNA into and through the RuvAB complex. RuvB forms 2 homohexamers on either side of HJ DNA bound by 1 or 2 RuvA tetramers; 4 subunits per hexamer contact DNA at a time. Coordinated motions by a converter formed by DNA-disengaged RuvB subunits stimulates ATP hydrolysis and nucleotide exchange. Immobilization of the converter enables RuvB to convert the ATP-contained energy into a lever motion, pulling 2 nucleotides of DNA out of the RuvA tetramer per ATP hydrolyzed, thus driving DNA branch migration. The RuvB motors rotate together with the DNA substrate, which together with the progressing nucleotide cycle form the mechanistic basis for DNA recombination by continuous HJ branch migration. Branch migration allows RuvC to scan DNA until it finds its consensus sequence, where it cleaves and resolves cruciform DNA. The chain is Holliday junction branch migration complex subunit RuvB from Cereibacter sphaeroides (strain ATCC 17029 / ATH 2.4.9) (Rhodobacter sphaeroides).